The chain runs to 299 residues: Leucine zipper transcription factor-like protein 1 (299 aa).

Positions 96–296 (LKLQTDISEL…DLRKRLAQYE (201 aa)) form a coiled coil. Residues 145-299 (GTAELLNKEI…KRLAQYEPED (155 aa)) form an interaction with BSS9 region.

This sequence belongs to the LZTFL1 family. Self-associates. Interacts with BBS9; the interaction mediates the association of LZTL1 with the BBsome complex and regulates BBSome ciliary trafficking. In terms of tissue distribution, expressed in prostate, ovary, stomach, pancreas, esophagus, breast, liver, bladder, kidney, thyroid, colon and lung (at protein level). Down-regulated in multiple primary tumors (at protein level). Detected in testis, heart, skeletal muscle, thymus, spleen, small intestine, and peripheral blood leukocytes.

Its subcellular location is the cytoplasm. In terms of biological role, regulates ciliary localization of the BBSome complex. Together with the BBSome complex, controls SMO ciliary trafficking and contributes to the sonic hedgehog (SHH) pathway regulation. May play a role in neurite outgrowth. May have tumor suppressor function. The sequence is that of Leucine zipper transcription factor-like protein 1 (LZTFL1) from Homo sapiens (Human).